We begin with the raw amino-acid sequence, 200 residues long: Peptidyl-tRNA hydrolase (200 aa).

Tyr16 is a binding site for tRNA. The active-site Proton acceptor is His21. TRNA is bound by residues Phe67, Asn69, and Asn115.

The protein belongs to the PTH family. Monomer.

It localises to the cytoplasm. The enzyme catalyses an N-acyl-L-alpha-aminoacyl-tRNA + H2O = an N-acyl-L-amino acid + a tRNA + H(+). In terms of biological role, hydrolyzes ribosome-free peptidyl-tRNAs (with 1 or more amino acids incorporated), which drop off the ribosome during protein synthesis, or as a result of ribosome stalling. Functionally, catalyzes the release of premature peptidyl moieties from peptidyl-tRNA molecules trapped in stalled 50S ribosomal subunits, and thus maintains levels of free tRNAs and 50S ribosomes. The polypeptide is Peptidyl-tRNA hydrolase (Prochlorococcus marinus (strain MIT 9312)).